A 320-amino-acid polypeptide reads, in one-letter code: Glutathione synthetase (320 aa).

In terms of domain architecture, ATP-grasp spans 130–315 (KIFISWFSRF…ITGILIDYIE (186 aa)). Position 156–212 (156–212 (WKEKNDIILKPLDAMGGKGVFRIKKDDPNFSVIVETLTNYEKKYCMIQTYLPEVQFG)) interacts with ATP. 2 residues coordinate Mg(2+): glutamate 286 and asparagine 288.

This sequence belongs to the prokaryotic GSH synthase family. Mg(2+) is required as a cofactor. Mn(2+) serves as cofactor.

It catalyses the reaction gamma-L-glutamyl-L-cysteine + glycine + ATP = glutathione + ADP + phosphate + H(+). It functions in the pathway sulfur metabolism; glutathione biosynthesis; glutathione from L-cysteine and L-glutamate: step 2/2. The sequence is that of Glutathione synthetase from Buchnera aphidicola subsp. Schizaphis graminum (strain Sg).